Reading from the N-terminus, the 334-residue chain is Endoplasmic reticulum junction formation protein lunapark (334 aa).

At 1 to 40 (MGWFFQKKKEFDFGGELDRLEMKLEEAQYNIDNIQSQKKK) the chain is on the cytoplasmic side. Residues 12-42 (DFGGELDRLEMKLEEAQYNIDNIQSQKKKIL) adopt a coiled-coil conformation. A helical membrane pass occupies residues 41–61 (ILFRYTVCSLAIYTIGMAVWA). Topologically, residues 62-78 (SRSSILFQHPLFSKLFR) are lumenal. A helical transmembrane segment spans residues 79 to 99 (ISLYILGVFSLYMFRWAIAWF). A coiled-coil region spans residues 99–127 (FCEKRLSRARMNLHKLNAEKRKILDALKS). Residues 100-334 (CEKRLSRARM…SVPESLTPTK (235 aa)) are Cytoplasmic-facing. The segment at 201 to 227 (CSHCFHHNGLASYGEKASDVRYVCLFC) adopts a C4-type; plays a role in ER morphology zinc-finger fold. The interval 237 to 315 (KSLPSSEMDS…SSPDASYNSV (79 aa)) is disordered. The segment covering 239-252 (LPSSEMDSNLQTNP) has biased composition (polar residues). The segment covering 253–270 (SSISKGKKNNSNNTTQKG) has biased composition (low complexity). Polar residues predominate over residues 273-283 (IISSPQVINAS). S284 carries the phosphoserine modification. Low complexity predominate over residues 297 to 315 (ALPTSPLSSSSPDASYNSV).

It belongs to the lunapark family.

The protein resides in the endoplasmic reticulum membrane. The protein localises to the golgi apparatus membrane. Plays a role in tubular endoplasmic reticulum network formation and maintenance. This chain is Endoplasmic reticulum junction formation protein lunapark (lnp1), found in Schizosaccharomyces pombe (strain 972 / ATCC 24843) (Fission yeast).